The chain runs to 252 residues: Mitochondrial peculiar membrane protein 1 (252 aa).

A disordered region spans residues 230-252; that stretch reads TTTTSKGSSPQVKHKVVSVDEDN.

The protein resides in the mitochondrion membrane. This chain is Mitochondrial peculiar membrane protein 1 (MPM1), found in Saccharomyces cerevisiae (strain ATCC 204508 / S288c) (Baker's yeast).